The sequence spans 232 residues: Large ribosomal subunit protein uL1 (232 aa).

This sequence belongs to the universal ribosomal protein uL1 family. In terms of assembly, part of the 50S ribosomal subunit.

Its function is as follows. Binds directly to 23S rRNA. The L1 stalk is quite mobile in the ribosome, and is involved in E site tRNA release. Protein L1 is also a translational repressor protein, it controls the translation of the L11 operon by binding to its mRNA. The sequence is that of Large ribosomal subunit protein uL1 from Xanthomonas axonopodis pv. citri (strain 306).